A 235-amino-acid chain; its full sequence is Ribonuclease PH (235 aa).

Phosphate is bound by residues Arg86 and 124 to 126 (GTR).

The protein belongs to the RNase PH family. As to quaternary structure, homohexameric ring arranged as a trimer of dimers.

The catalysed reaction is tRNA(n+1) + phosphate = tRNA(n) + a ribonucleoside 5'-diphosphate. In terms of biological role, phosphorolytic 3'-5' exoribonuclease that plays an important role in tRNA 3'-end maturation. Removes nucleotide residues following the 3'-CCA terminus of tRNAs; can also add nucleotides to the ends of RNA molecules by using nucleoside diphosphates as substrates, but this may not be physiologically important. Probably plays a role in initiation of 16S rRNA degradation (leading to ribosome degradation) during starvation. The protein is Ribonuclease PH of Francisella tularensis subsp. novicida (strain U112).